Consider the following 599-residue polypeptide: Proline--tRNA ligase (599 aa).

The protein belongs to the class-II aminoacyl-tRNA synthetase family. ProS type 1 subfamily. As to quaternary structure, homodimer.

The protein resides in the cytoplasm. It carries out the reaction tRNA(Pro) + L-proline + ATP = L-prolyl-tRNA(Pro) + AMP + diphosphate. Functionally, catalyzes the attachment of proline to tRNA(Pro) in a two-step reaction: proline is first activated by ATP to form Pro-AMP and then transferred to the acceptor end of tRNA(Pro). As ProRS can inadvertently accommodate and process non-cognate amino acids such as alanine and cysteine, to avoid such errors it has two additional distinct editing activities against alanine. One activity is designated as 'pretransfer' editing and involves the tRNA(Pro)-independent hydrolysis of activated Ala-AMP. The other activity is designated 'posttransfer' editing and involves deacylation of mischarged Ala-tRNA(Pro). The misacylated Cys-tRNA(Pro) is not edited by ProRS. This chain is Proline--tRNA ligase, found in Prochlorococcus marinus (strain MIT 9313).